Reading from the N-terminus, the 316-residue chain is uncharacterized protein (316 aa).

This sequence belongs to the asfivirus F317L family.

It is found in the virion. This is an uncharacterized protein from Ornithodoros (relapsing fever ticks).